We begin with the raw amino-acid sequence, 387 residues long: 3-ketoacyl-CoA thiolase (387 aa).

The Acyl-thioester intermediate role is filled by cysteine 91. Residues histidine 343 and cysteine 373 each act as proton acceptor in the active site.

It belongs to the thiolase-like superfamily. Thiolase family. Heterotetramer of two alpha chains (FadB) and two beta chains (FadA).

It is found in the cytoplasm. It carries out the reaction an acyl-CoA + acetyl-CoA = a 3-oxoacyl-CoA + CoA. It participates in lipid metabolism; fatty acid beta-oxidation. In terms of biological role, catalyzes the final step of fatty acid oxidation in which acetyl-CoA is released and the CoA ester of a fatty acid two carbons shorter is formed. The sequence is that of 3-ketoacyl-CoA thiolase from Aeromonas hydrophila subsp. hydrophila (strain ATCC 7966 / DSM 30187 / BCRC 13018 / CCUG 14551 / JCM 1027 / KCTC 2358 / NCIMB 9240 / NCTC 8049).